A 917-amino-acid polypeptide reads, in one-letter code: Protein translocase subunit SecA (917 aa).

ATP-binding positions include Gln-87, 105-109 (GEGKT), and Asp-516. Zn(2+)-binding residues include Cys-901, Cys-903, Cys-912, and His-913.

This sequence belongs to the SecA family. As to quaternary structure, monomer and homodimer. Part of the essential Sec protein translocation apparatus which comprises SecA, SecYEG and auxiliary proteins SecDF-YajC and YidC. Zn(2+) serves as cofactor.

Its subcellular location is the cell inner membrane. It is found in the cytoplasm. The catalysed reaction is ATP + H2O + cellular proteinSide 1 = ADP + phosphate + cellular proteinSide 2.. Functionally, part of the Sec protein translocase complex. Interacts with the SecYEG preprotein conducting channel. Has a central role in coupling the hydrolysis of ATP to the transfer of proteins into and across the cell membrane, serving both as a receptor for the preprotein-SecB complex and as an ATP-driven molecular motor driving the stepwise translocation of polypeptide chains across the membrane. The sequence is that of Protein translocase subunit SecA from Acidovorax sp. (strain JS42).